The chain runs to 224 residues: Redox-sensing transcriptional repressor Rex (224 aa).

Positions 17–56 form a DNA-binding region, H-T-H motif; it reads RYHRYLEELLKNDVKRISSRELSEKMGVTASQIRQDLNNF. 91-96 is an NAD(+) binding site; it reads GAGNLG.

It belongs to the transcriptional regulatory Rex family. In terms of assembly, homodimer.

It is found in the cytoplasm. Modulates transcription in response to changes in cellular NADH/NAD(+) redox state. The polypeptide is Redox-sensing transcriptional repressor Rex (Thermoanaerobacter sp. (strain X514)).